An 86-amino-acid polypeptide reads, in one-letter code: UPF0297 protein SAHV_1604 (86 aa).

It belongs to the UPF0297 family.

This Staphylococcus aureus (strain Mu3 / ATCC 700698) protein is UPF0297 protein SAHV_1604.